The chain runs to 341 residues: Anthranilate phosphoribosyltransferase (341 aa).

5-phospho-alpha-D-ribose 1-diphosphate-binding positions include Gly81, 84–85 (GD), 91–94 (NVST), 109–117 (KHGNRSVSS), and Ser121. Anthranilate is bound at residue Gly81. Ser93 is a binding site for Mg(2+). Asn112 contributes to the anthranilate binding site. Residue Arg167 participates in anthranilate binding. Asp226 and Glu227 together coordinate Mg(2+).

The protein belongs to the anthranilate phosphoribosyltransferase family. As to quaternary structure, homodimer. Requires Mg(2+) as cofactor.

It catalyses the reaction N-(5-phospho-beta-D-ribosyl)anthranilate + diphosphate = 5-phospho-alpha-D-ribose 1-diphosphate + anthranilate. It functions in the pathway amino-acid biosynthesis; L-tryptophan biosynthesis; L-tryptophan from chorismate: step 2/5. Its function is as follows. Catalyzes the transfer of the phosphoribosyl group of 5-phosphorylribose-1-pyrophosphate (PRPP) to anthranilate to yield N-(5'-phosphoribosyl)-anthranilate (PRA). The polypeptide is Anthranilate phosphoribosyltransferase (Teredinibacter turnerae (strain ATCC 39867 / T7901)).